Here is a 248-residue protein sequence, read N- to C-terminus: tRNA pseudouridine synthase A (248 aa).

The active-site Nucleophile is the D53. Residue Y111 participates in substrate binding.

The protein belongs to the tRNA pseudouridine synthase TruA family. As to quaternary structure, homodimer.

The catalysed reaction is uridine(38/39/40) in tRNA = pseudouridine(38/39/40) in tRNA. In terms of biological role, formation of pseudouridine at positions 38, 39 and 40 in the anticodon stem and loop of transfer RNAs. The sequence is that of tRNA pseudouridine synthase A from Streptococcus thermophilus (strain ATCC BAA-491 / LMD-9).